A 164-amino-acid polypeptide reads, in one-letter code: 3-dehydroquinate dehydratase (164 aa).

The Proton acceptor role is filled by Y22. N73, H79, and D86 together coordinate substrate. The active-site Proton donor is the H99. Substrate is bound by residues 100-101 and R110; that span reads IS.

Belongs to the type-II 3-dehydroquinase family. In terms of assembly, homododecamer.

It catalyses the reaction 3-dehydroquinate = 3-dehydroshikimate + H2O. It participates in metabolic intermediate biosynthesis; chorismate biosynthesis; chorismate from D-erythrose 4-phosphate and phosphoenolpyruvate: step 3/7. Its function is as follows. Catalyzes a trans-dehydration via an enolate intermediate. The protein is 3-dehydroquinate dehydratase of Aliarcobacter butzleri (strain RM4018) (Arcobacter butzleri).